Here is a 281-residue protein sequence, read N- to C-terminus: Ribosomal RNA small subunit methyltransferase I (281 aa).

Belongs to the methyltransferase superfamily. RsmI family.

It localises to the cytoplasm. It catalyses the reaction cytidine(1402) in 16S rRNA + S-adenosyl-L-methionine = 2'-O-methylcytidine(1402) in 16S rRNA + S-adenosyl-L-homocysteine + H(+). Functionally, catalyzes the 2'-O-methylation of the ribose of cytidine 1402 (C1402) in 16S rRNA. In Pasteurella multocida (strain Pm70), this protein is Ribosomal RNA small subunit methyltransferase I.